The chain runs to 186 residues: GTP cyclohydrolase 1 (186 aa).

The Zn(2+) site is built by C78, H81, and C150.

Belongs to the GTP cyclohydrolase I family. Toroid-shaped homodecamer, composed of two pentamers of five dimers.

It catalyses the reaction GTP + H2O = 7,8-dihydroneopterin 3'-triphosphate + formate + H(+). Its pathway is cofactor biosynthesis; 7,8-dihydroneopterin triphosphate biosynthesis; 7,8-dihydroneopterin triphosphate from GTP: step 1/1. The protein is GTP cyclohydrolase 1 of Enterococcus faecalis (strain ATCC 700802 / V583).